The primary structure comprises 227 residues: Cytochrome c oxidase subunit 2 (227 aa).

Over 1-14 the chain is Mitochondrial intermembrane; it reads MAYPFQLGLQDATS. The chain crosses the membrane as a helical span at residues 15 to 45; sequence PIMEELMNFHDHTLMIVFLISSLVLYIISLM. The Mitochondrial matrix portion of the chain corresponds to 46-59; the sequence is LTTKLTHTSTMDAQ. A helical transmembrane segment spans residues 60–87; sequence EVETIWTILPAVILILIALPSLRILYMM. The Mitochondrial intermembrane portion of the chain corresponds to 88 to 227; sequence DEINNPVLTV…NFENWSTSMI (140 aa). Cu cation contacts are provided by histidine 161, cysteine 196, glutamate 198, cysteine 200, histidine 204, and methionine 207. Residue glutamate 198 participates in Mg(2+) binding.

Belongs to the cytochrome c oxidase subunit 2 family. In terms of assembly, component of the cytochrome c oxidase (complex IV, CIV), a multisubunit enzyme composed of 14 subunits. The complex is composed of a catalytic core of 3 subunits MT-CO1, MT-CO2 and MT-CO3, encoded in the mitochondrial DNA, and 11 supernumerary subunits COX4I, COX5A, COX5B, COX6A, COX6B, COX6C, COX7A, COX7B, COX7C, COX8 and NDUFA4, which are encoded in the nuclear genome. The complex exists as a monomer or a dimer and forms supercomplexes (SCs) in the inner mitochondrial membrane with NADH-ubiquinone oxidoreductase (complex I, CI) and ubiquinol-cytochrome c oxidoreductase (cytochrome b-c1 complex, complex III, CIII), resulting in different assemblies (supercomplex SCI(1)III(2)IV(1) and megacomplex MCI(2)III(2)IV(2)). Found in a complex with TMEM177, COA6, COX18, COX20, SCO1 and SCO2. Interacts with TMEM177 in a COX20-dependent manner. Interacts with COX20. Interacts with COX16. Requires Cu cation as cofactor.

It is found in the mitochondrion inner membrane. The enzyme catalyses 4 Fe(II)-[cytochrome c] + O2 + 8 H(+)(in) = 4 Fe(III)-[cytochrome c] + 2 H2O + 4 H(+)(out). Functionally, component of the cytochrome c oxidase, the last enzyme in the mitochondrial electron transport chain which drives oxidative phosphorylation. The respiratory chain contains 3 multisubunit complexes succinate dehydrogenase (complex II, CII), ubiquinol-cytochrome c oxidoreductase (cytochrome b-c1 complex, complex III, CIII) and cytochrome c oxidase (complex IV, CIV), that cooperate to transfer electrons derived from NADH and succinate to molecular oxygen, creating an electrochemical gradient over the inner membrane that drives transmembrane transport and the ATP synthase. Cytochrome c oxidase is the component of the respiratory chain that catalyzes the reduction of oxygen to water. Electrons originating from reduced cytochrome c in the intermembrane space (IMS) are transferred via the dinuclear copper A center (CU(A)) of subunit 2 and heme A of subunit 1 to the active site in subunit 1, a binuclear center (BNC) formed by heme A3 and copper B (CU(B)). The BNC reduces molecular oxygen to 2 water molecules using 4 electrons from cytochrome c in the IMS and 4 protons from the mitochondrial matrix. The chain is Cytochrome c oxidase subunit 2 (MT-CO2) from Apodemus mystacinus (Broad-toothed field mouse).